Reading from the N-terminus, the 274-residue chain is Large ribosomal subunit protein uL2cz/uL2cy (274 aa).

The disordered stretch occupies residues 224–253 (NPIDHPHGGGEGRAPIGRKKPTTPWGYPAL).

It belongs to the universal ribosomal protein uL2 family. Part of the 50S ribosomal subunit.

The protein resides in the plastid. The polypeptide is Large ribosomal subunit protein uL2cz/uL2cy (rpl2-A) (Epifagus virginiana (Beechdrops)).